The primary structure comprises 256 residues: MSDPRKAQEQEPTTHFGFQDVPESQKAEKVAEVFHSVAAKYDLMNDVLSGGLHRLWKRFTIELSGVRPGNRVLDIAGGTGDLTRKFASIVGPTGEVVLADINDSMLKVGRDRLLDKGVAGNVQFVQADAEKLPFPDNHFDVVTIAFGLRNVTHKEDALRSMLRVLKPGGRLLVLEFSKPGNPLLAKVYDTYSFSFMPLAGKLITNDADSYRYLAESIRMHPDQETLKAMMVDAGFERVTYHNMTGGIVALHRGIKP.

S-adenosyl-L-methionine contacts are provided by residues Thr79, Asp100, and Asp128–Ala129.

This sequence belongs to the class I-like SAM-binding methyltransferase superfamily. MenG/UbiE family.

It catalyses the reaction a 2-demethylmenaquinol + S-adenosyl-L-methionine = a menaquinol + S-adenosyl-L-homocysteine + H(+). The enzyme catalyses a 2-methoxy-6-(all-trans-polyprenyl)benzene-1,4-diol + S-adenosyl-L-methionine = a 5-methoxy-2-methyl-3-(all-trans-polyprenyl)benzene-1,4-diol + S-adenosyl-L-homocysteine + H(+). It participates in quinol/quinone metabolism; menaquinone biosynthesis; menaquinol from 1,4-dihydroxy-2-naphthoate: step 2/2. The protein operates within cofactor biosynthesis; ubiquinone biosynthesis. Its function is as follows. Methyltransferase required for the conversion of demethylmenaquinol (DMKH2) to menaquinol (MKH2) and the conversion of 2-polyprenyl-6-methoxy-1,4-benzoquinol (DDMQH2) to 2-polyprenyl-3-methyl-6-methoxy-1,4-benzoquinol (DMQH2). In Ectopseudomonas mendocina (strain ymp) (Pseudomonas mendocina), this protein is Ubiquinone/menaquinone biosynthesis C-methyltransferase UbiE.